The sequence spans 694 residues: Protein NPGR1 (694 aa).

The tract at residues Phe-12–Asp-40 is disordered. TPR repeat units follow at residues Leu-32–Tyr-65, Glu-66–Ile-101, Leu-135–Ala-168, Gln-188–Leu-221, Gly-307–Arg-340, Thr-551–Ser-584, Pro-585–His-618, Pro-620–Asn-654, and His-655–Ala-688.

Interacts with calmodulin in a calcium-dependent manner. In terms of tissue distribution, expressed in pollen, flowers, fruits and leaves.

The protein is Protein NPGR1 of Arabidopsis thaliana (Mouse-ear cress).